The following is a 624-amino-acid chain: Heat shock factor protein 5 (624 aa).

The DNA-binding element occupies 11 to 228 (NPNNFPAKLW…FHRSFRRDNL (218 aa)). Disordered stretches follow at residues 52-77 (LSPP…SGVG), 112-138 (GAAG…HSPH), 186-214 (SASA…HGPV), 429-461 (CPSS…LEPL), and 572-605 (GPAN…DLHL). 2 stretches are compositionally biased toward gly residues: residues 58–77 (GAGG…SGVG) and 112–127 (GAAG…GPAG). Low complexity-rich tracts occupy residues 186–197 (SASASTSPLQHQ) and 442–457 (PNAN…QASQ). Serine 600 is subject to Phosphoserine.

The protein belongs to the HSF family. In terms of assembly, homooligomer. As to expression, highly expressed in testis particularly in spermatocytes (at protein level). Not expressed in fetal testis and ovary.

The protein localises to the nucleus. Its subcellular location is the chromosome. Functionally, DNA-binding transcription factor that is essential for male fertility, spermatogenesis and meiotic prophase progression in spermatocytes under non-stress conditions. Positvely and negatively regulates gene expression to ensure progression of meiotic prophase beyond pachytene stage in spermatocytes. Plays a role in male germline meiotic sex chromosome remodeling and silencing through regulation of SMARCA4. In Mus musculus (Mouse), this protein is Heat shock factor protein 5 (Hsf5).